An 89-amino-acid polypeptide reads, in one-letter code: Small ribosomal subunit protein uS15 (89 aa).

It belongs to the universal ribosomal protein uS15 family. Part of the 30S ribosomal subunit. Forms a bridge to the 50S subunit in the 70S ribosome, contacting the 23S rRNA.

Its function is as follows. One of the primary rRNA binding proteins, it binds directly to 16S rRNA where it helps nucleate assembly of the platform of the 30S subunit by binding and bridging several RNA helices of the 16S rRNA. Functionally, forms an intersubunit bridge (bridge B4) with the 23S rRNA of the 50S subunit in the ribosome. In Photobacterium profundum (strain SS9), this protein is Small ribosomal subunit protein uS15.